Reading from the N-terminus, the 102-residue chain is MGKAGNIEHVEERVESEVMPPSMYKVILNNDDYTPMDFVIEVLQLFFKKTEEQATDIMLAIHHQGKGICGIFPFGIAETKVAQVNQFARQNQHPLLCSLEKA.

The protein belongs to the ClpS family. In terms of assembly, binds to the N-terminal domain of the chaperone ClpA.

In terms of biological role, involved in the modulation of the specificity of the ClpAP-mediated ATP-dependent protein degradation. The chain is ATP-dependent Clp protease adapter protein ClpS from Shewanella woodyi (strain ATCC 51908 / MS32).